Consider the following 236-residue polypeptide: Sugar fermentation stimulation protein homolog (236 aa).

Belongs to the SfsA family.

This Gloeobacter violaceus (strain ATCC 29082 / PCC 7421) protein is Sugar fermentation stimulation protein homolog.